We begin with the raw amino-acid sequence, 531 residues long: uncharacterized protein (531 aa).

The first 28 residues, 1–28 (MNTKGIIAKLTAGALIANLLICPANTLA), serve as a signal peptide directing secretion. 3 SLH domains span residues 29-85 (EKKT…QINK), 86-149 (QAKP…IGDL), and 150-210 (PTQF…SKRM). Residues 335–517 (IIIDPGHGGI…AAEAIYAGIL (183 aa)) form the MurNAc-LAA domain.

It in the C-terminal section; belongs to the N-acetylmuramoyl-L-alanine amidase 3 family.

It is found in the secreted. The protein resides in the cell wall. Its subcellular location is the S-layer. This is an uncharacterized protein from Bacillus anthracis.